A 371-amino-acid polypeptide reads, in one-letter code: L-lysine 4-hydroxylase (371 aa).

Fe cation-binding residues include histidine 174, glutamate 176, and histidine 310.

It belongs to the clavaminate synthase family. Requires Fe(2+) as cofactor.

It catalyses the reaction L-lysine + 2-oxoglutarate + O2 = (4R)-4-hydroxy-L-lysine + succinate + CO2. In terms of biological role, alpha-ketoglutarate-dependent dioxygenase that in vitro catalyzes the regio- and stereoselective hydroxylation of L-lysine, leading to (4R)-4-hydroxy-L-lysine. The polypeptide is L-lysine 4-hydroxylase (Niastella koreensis (strain DSM 17620 / KACC 11465 / NBRC 106392 / GR20-10)).